A 164-amino-acid chain; its full sequence is Photosystem II extrinsic protein V (164 aa).

An N-terminal signal peptide occupies residues 1 to 27 (MALKSKFLVGSILATFILNGFSSPAQA). Residues C64, C67, H68, and H119 each coordinate heme c.

The protein belongs to the cytochrome c family. PsbV subfamily. In terms of assembly, PSII is composed of 1 copy each of membrane proteins PsbA, PsbB, PsbC, PsbD, PsbE, PsbF, PsbH, PsbI, PsbJ, PsbK, PsbL, PsbM, PsbT, PsbY, PsbZ, Psb30/Ycf12, at least 3 peripheral proteins of the oxygen-evolving complex and a large number of cofactors. It forms dimeric complexes. It depends on heme c as a cofactor.

It localises to the plastid. It is found in the chloroplast thylakoid membrane. In terms of biological role, one of the extrinsic, lumenal subunits of photosystem II (PSII). PSII is a light-driven water plastoquinone oxidoreductase, using light energy to abstract electrons from H(2)O, generating a proton gradient subsequently used for ATP formation. The extrinsic proteins stabilize the structure of photosystem II oxygen-evolving complex (OEC), the ion environment of oxygen evolution and protect the OEC against heat-induced inactivation. In Emiliania huxleyi (Coccolithophore), this protein is Photosystem II extrinsic protein V.